We begin with the raw amino-acid sequence, 248 residues long: Probable phosphatase VS_II0429 (248 aa).

His-8, His-10, His-16, His-41, Glu-74, His-102, His-132, Asp-194, and His-196 together coordinate Zn(2+).

It belongs to the PHP family. Requires Zn(2+) as cofactor.

This chain is Probable phosphatase VS_II0429, found in Vibrio atlanticus (strain LGP32) (Vibrio splendidus (strain Mel32)).